The chain runs to 158 residues: Flagellar assembly factor FliW (158 aa).

This sequence belongs to the FliW family. Interacts with translational regulator CsrA and flagellin(s).

It localises to the cytoplasm. Acts as an anti-CsrA protein, binds CsrA and prevents it from repressing translation of its target genes, one of which is flagellin. Binds to flagellin and participates in the assembly of the flagellum. This chain is Flagellar assembly factor FliW, found in Syntrophus aciditrophicus (strain SB).